The chain runs to 723 residues: MSYSVTLTGPGPWGFRLQGGKDFNMPLTISRITPGSKAAQSQLSQGDLVVAIDGVNTDTMTHLEAQNKIKSASYNLSLTLQKSKRPIPISTTAPPIQSPLPVIPHQKDPALDTNGSLATPSPSPEARASPGALEFGDTFSSSFSQTSVCSPLMEASGPVLPLGSPVAKASSEGAQGSVSPKVLPGPSQPRQYNNPIGLYSAETLREMAQMYQMSLRGKASGAGLLGGSLPVKDLAVDSASPVYQAVIKTQSKPEDEADEWARRSSNLQSRSFRILAQMTGTEYMQDPDEEALRRSSTPIEHAPVCTSQATSPLLPASAQSPAAASPIAASPTLATAAATHAAAASAAGPAASPVENPRPQASAYSPAAAASPAPSAHTSYSEGPAAPAPKPRVVTTASIRPSVYQPVPASSYSPSPGANYSPTPYTPSPAPAYTPSPAPTYTPSPAPTYSPSPAPAYTPSPAPNYTPTPSAAYSGGPSESASRPPWVTDDSFSQKFAPGKSTTTVSKQTLPRGAPAYNPTGPQVTPLARGTFQRAERFPASSRTPLCGHCNNVIRGPFLVAMGRSWHPEEFNCAYCKTSLADVCFVEEQNNVYCERCYEQFFAPICAKCNTKIMGEVMHALRQTWHTTCFVCAACKKPFGNSLFHMEDGEPYCEKDYINLFSTKCHGCDFPVEAGDKFIEALGHTWHDTCFICAVCHVNLEGQPFYSKKDKPLCKKHAHAINV.

Residues 1 to 84 (MSYSVTLTGP…NLSLTLQKSK (84 aa)) enclose the PDZ domain. 3 positions are modified to phosphoserine: Ser44, Ser98, and Asp112. Disordered stretches follow at residues 89-134 (ISTT…GALE) and 164-193 (SPVA…RQYN). Thr119 carries the post-translational modification Phosphothreonine. Phosphoserine is present on residues Ser121 and Ser123. Ser214 carries the post-translational modification Phosphoserine. Arg216 is subject to Omega-N-methylarginine. 3 positions are modified to phosphoserine: Ser220, Ser251, and Asp288. 2 disordered regions span residues 280 to 423 (GTEY…YSPT) and 436 to 525 (SPAP…PQVT). Ala291 is subject to Omega-N-methylarginine. The segment covering 309-376 (ATSPLLPASA…AAAASPAPSA (68 aa)) has biased composition (low complexity). Ile327 carries the phosphoserine modification. Ser330 is modified (omega-N-methylarginine). A compositionally biased stretch (pro residues) spans 436–466 (SPAPTYTPSPAPTYSPSPAPAYTPSPAPNYT). Over residues 490-509 (DSFSQKFAPGKSTTTVSKQT) the composition is skewed to polar residues. Residues Arg512 and Arg529 each carry the omega-N-methylarginine modification. 3 LIM zinc-binding domains span residues 545–603 (PLCG…QFFA), 604–663 (PICA…LFST), and 664–723 (KCHG…AINV).

As to quaternary structure, interacts via its LIM domains with various PKC isoforms. Interacts via its PDZ domain with the ACTN2 C-terminal region. Interacts with MYOZ1, MYOZ2 and MYOZ3. As to expression, expressed primarily in adult heart and skeletal muscle, and detected at lower levels in lung. Isoforms are expressed in a tissue-specific manner. Isoform 1, isoform 3 and isoform 5 are expressed in heart, whereas isoform 2, isoform 4 and isoform 6 are expressed in skeletal muscle.

The protein resides in the cytoplasm. It is found in the perinuclear region. Its subcellular location is the cell projection. It localises to the pseudopodium. The protein localises to the cytoskeleton. The protein resides in the myofibril. It is found in the sarcomere. Its subcellular location is the z line. Its function is as follows. May function as an adapter in striated muscle to couple protein kinase C-mediated signaling via its LIM domains to the cytoskeleton. This is LIM domain-binding protein 3 from Mus musculus (Mouse).